A 371-amino-acid polypeptide reads, in one-letter code: Undecaprenyl-diphosphatase 1 (371 aa).

3 helical membrane-spanning segments follow: residues 53–73 (PYLA…IVAF), 100–120 (LAWL…LLEH), and 126–146 (LGRP…MLLG). Residues 152–226 (RSTTRGAPGP…PEAEDVTLPE (75 aa)) form a disordered region. 3 helical membrane passes run 291–311 (FAFL…LPDL), 322–342 (QTLF…RFLA), and 351–371 (TPFA…FGIF).

Belongs to the UppP family.

The protein resides in the cell membrane. It catalyses the reaction di-trans,octa-cis-undecaprenyl diphosphate + H2O = di-trans,octa-cis-undecaprenyl phosphate + phosphate + H(+). Functionally, catalyzes the dephosphorylation of undecaprenyl diphosphate (UPP). Confers resistance to bacitracin. The polypeptide is Undecaprenyl-diphosphatase 1 (Frankia casuarinae (strain DSM 45818 / CECT 9043 / HFP020203 / CcI3)).